The primary structure comprises 170 residues: Large ribosomal subunit protein uL5 (170 aa).

It belongs to the universal ribosomal protein uL5 family. Part of the 50S ribosomal subunit; contacts the 5S rRNA and probably tRNA. Forms a bridge to the 30S subunit in the 70S ribosome.

This is one of the proteins that bind and probably mediate the attachment of the 5S RNA into the large ribosomal subunit, where it forms part of the central protuberance. In the 70S ribosome it contacts protein S13 of the 30S subunit (bridge B1b), connecting the 2 subunits; this bridge is implicated in subunit movement. May contact the P site tRNA; the 5S rRNA and some of its associated proteins might help stabilize positioning of ribosome-bound tRNAs. This Thermoplasma acidophilum (strain ATCC 25905 / DSM 1728 / JCM 9062 / NBRC 15155 / AMRC-C165) protein is Large ribosomal subunit protein uL5.